The chain runs to 287 residues: Telomere repeat-binding factor 5 (287 aa).

Positions 1-62 (MGNQKLKWTA…WRNLSVPPGT (62 aa)) constitute an HTH myb-type domain. Residues 28–58 (WKNILRDPEFADQLIHRSNIDLKDKWRNLSV) constitute a DNA-binding region (H-T-H motif). The segment at 58–107 (VPPGTQSLTNKARPAKVKEEGDTPAADANDAVTIPRPIPTIPPPPGRRTL) is disordered. The span at 93 to 103 (RPIPTIPPPPG) shows a compositional bias: pro residues. The H15 domain maps to 119-193 (NAPRYDGVIF…SIQNFYKIPD (75 aa)). Residues 233-259 (AACKVVEAENKIDVAKLAAEEFEKMTK) adopt a coiled-coil conformation.

It belongs to the histone H1/H5 family. SMH subfamily.

Its subcellular location is the nucleus. It localises to the chromosome. Functionally, binds preferentially double-stranded telomeric repeats. The protein is Telomere repeat-binding factor 5 of Arabidopsis thaliana (Mouse-ear cress).